The sequence spans 60 residues: Large ribosomal subunit protein uL30 (60 aa).

It belongs to the universal ribosomal protein uL30 family. As to quaternary structure, part of the 50S ribosomal subunit.

This chain is Large ribosomal subunit protein uL30, found in Lysinibacillus sphaericus (strain C3-41).